The primary structure comprises 355 residues: MPAARPAGAGVGLVDRYGRRATDMRLSLTDKCNLRCTYCMPAEGLEWLSKQAVMSASEIVRIVGIGVGRLGVRELRLTGGEPLVRHDLVDIIAELRRNHPELPISMTTNGVGLAKKVAPLKAAGLTRINVSLDSLHEETFTKLTRRPFLDQVLAGVDAAWAAGLGPVKLNAVLMRGINDAEAPSLLAWAVERGYELRFIEQMPLDADHGWTRRNMITAAEIRDLLSTDFVLTPDPRARDGAPAERFEVRRRVAGSGAGLGPVLGTVGIIASVTEPFCSDCRRTRITAEGRIMSCLFSREEFDLLVLLRSGASDDDLARRWQDAMWLKPKAHGMDHVGLDAPDFVQPDRSMSAIGG.

The Radical SAM core domain occupies 16-242 (RYGRRATDMR…PDPRARDGAP (227 aa)). GTP is bound at residue R25. [4Fe-4S] cluster-binding residues include C32 and C36. Y38 is an S-adenosyl-L-methionine binding site. [4Fe-4S] cluster is bound at residue C39. Position 76 (R76) interacts with GTP. Position 80 (G80) interacts with S-adenosyl-L-methionine. T107 is a GTP binding site. S131 contacts S-adenosyl-L-methionine. K168 provides a ligand contact to GTP. M202 provides a ligand contact to S-adenosyl-L-methionine. [4Fe-4S] cluster is bound by residues C277 and C280. 282 to 284 (RTR) contributes to the GTP binding site. [4Fe-4S] cluster is bound at residue C294.

The protein belongs to the radical SAM superfamily. MoaA family. As to quaternary structure, monomer. The cofactor is [4Fe-4S] cluster.

It carries out the reaction GTP + AH2 + S-adenosyl-L-methionine = (8S)-3',8-cyclo-7,8-dihydroguanosine 5'-triphosphate + 5'-deoxyadenosine + L-methionine + A + H(+). The protein operates within cofactor biosynthesis; molybdopterin biosynthesis. Functionally, catalyzes, together with MoaC, the conversion of 5'-GTP to cyclic pyranopterin monophosphate (cPMP or molybdopterin precursor Z). In terms of biological role, catalyzes the cyclization of GTP to (8S)-3',8-cyclo-7,8-dihydroguanosine 5'-triphosphate. This is GTP 3',8-cyclase from Paenarthrobacter nicotinovorans (Arthrobacter nicotinovorans).